Reading from the N-terminus, the 176-residue chain is Probable non-specific lipid-transfer protein 1 (176 aa).

Residues 1–37 (MRTVSAPSAVALVVIVAAGLAWTSLASVAPPAPAPGS) form the signal peptide. Cystine bridges form between C41-C89, C51-C66, C67-C112, and C87-C128. The disordered stretch occupies residues 139–176 (QLPVSLRHGPVTGPSDPAHKARLERPQIRVPPPAPEKA). The span at 155-165 (PAHKARLERPQ) shows a compositional bias: basic and acidic residues. Residues 167-176 (RVPPPAPEKA) show a composition bias toward pro residues.

It belongs to the plant LTP family.

Plant non-specific lipid-transfer proteins transfer phospholipids as well as galactolipids across membranes. May play a role in wax or cutin deposition in the cell walls of expanding epidermal cells and certain secretory tissues. This is Probable non-specific lipid-transfer protein 1 from Parietaria judaica (Pellitory-of-the-wall).